Reading from the N-terminus, the 281-residue chain is Pantothenate synthetase (281 aa).

Residue 30-37 (MGYLHEGH) coordinates ATP. The Proton donor role is filled by His37. Gln61 is a (R)-pantoate binding site. Gln61 is a beta-alanine binding site. 147–150 (GQKD) serves as a coordination point for ATP. Gln153 serves as a coordination point for (R)-pantoate. ATP is bound by residues Val176 and 184–187 (MSSR).

It belongs to the pantothenate synthetase family. Homodimer.

It is found in the cytoplasm. The enzyme catalyses (R)-pantoate + beta-alanine + ATP = (R)-pantothenate + AMP + diphosphate + H(+). It participates in cofactor biosynthesis; (R)-pantothenate biosynthesis; (R)-pantothenate from (R)-pantoate and beta-alanine: step 1/1. Its function is as follows. Catalyzes the condensation of pantoate with beta-alanine in an ATP-dependent reaction via a pantoyl-adenylate intermediate. The protein is Pantothenate synthetase of Heliobacterium modesticaldum (strain ATCC 51547 / Ice1).